Consider the following 580-residue polypeptide: Mucolipin-1 (580 aa).

Positions 1 to 38 are disordered; sequence MATPAGRRASETERLLTPNPGYGTQVGTSPAPTTPTEE. Residues 1 to 65 lie on the Cytoplasmic side of the membrane; the sequence is MATPAGRRAS…FRAKGRKPCK (65 aa). A Phosphoserine modification is found at Ser-10. The short motif at 11–16 is the Dileucine motif; mediates targeting to lysosomes element; sequence ETERLL. The interaction with phosphoinositides stretch occupies residues 42-62; sequence RRRLKYFFMSPCDKFRAKGRK. Residues 66 to 86 traverse the membrane as a helical segment; that stretch reads LMLQVVKILVVTVQLILFGLS. At 87-298 the chain is on the extracellular side; the sequence is NQLVVTFREE…VSRHGDNSFR (212 aa). Residues 107–121 form an extracellular/lumenal pore loop region; that stretch reads LGYSDGSDDTFAAYT. Cys-166 and Cys-192 are oxidised to a cystine. Asn-220 and Asn-230 each carry an N-linked (GlcNAc...) asparagine glycan. Cys-253 and Cys-284 are joined by a disulfide. The chain crosses the membrane as a helical span at residues 299–321; it reads LLFDVVVILTCSLSFLLCARSLL. Residues 322-350 are Cytoplasmic-facing; the sequence is RGFLLQNEFVVFMWRRRGREISLWERLEF. The helical transmembrane segment at 351–371 threads the bilayer; sequence VNGWYILLVTSDVLTISGTVM. The Extracellular portion of the chain corresponds to 372–382; the sequence is KIGIEAKNLAS. The chain crosses the membrane as a helical span at residues 383-405; it reads YDVCSILLGTSTLLVWVGVIRYL. Residues 406–427 are Cytoplasmic-facing; sequence TFFHKYNILIATLRVALPSVMR. Residues 428–448 traverse the membrane as a helical segment; that stretch reads FCCCVAVIYLGYCFCGWIVLG. Residues 449-456 lie on the Extracellular side of the membrane; sequence PYHVKFRS. Residues 457 to 477 constitute an intramembrane region (pore-forming); sequence LSMVSECLFSLINGDDMFVTF. Residues 469–474 carry the Selectivity filter motif; that stretch reads NGDDMF. The Extracellular portion of the chain corresponds to 478–491; that stretch reads AAMQAQQGHSSLVW. Residues 492–513 traverse the membrane as a helical segment; that stretch reads LFSQLYLYSFISLFIYMVLSLF. Residues 514–580 lie on the Cytoplasmic side of the membrane; the sequence is IALITGAYDT…SPEDHSLLVN (67 aa). Phosphoserine is present on Ser-557. Residue Ser-559 is modified to Phosphoserine; by PAK. The required for palmitoylation and association with membranes stretch occupies residues 565–567; the sequence is CCC. Positions 573–578 match the Dileucine internalization motif; mediates AP2 complex-dependent internalization motif; sequence EDHSLL.

Belongs to the transient receptor (TC 1.A.4) family. Polycystin subfamily. MCOLN1 sub-subfamily. As to quaternary structure, homotetramer. Homooligomer. Can heterooligomerize with MCOLN2 or MCOLN3; heteromeric assemblies have different channel properties as compared to the respective homooligomers and may be tissue-specific. Interacts with PDCD6. Interacts with TMEM163. Interacts with LAPTM4B. Palmitoylated; involved in association with membranes. In terms of processing, phosphorylation by PKA inhibits channel activity. Dephosphorylation increases activity. Post-translationally, proteolytically cleaved probably involving multiple lysosomal proteases including cathepsin B; inhibits lysosomal channel activity. In terms of tissue distribution, widely expressed, with the highest expression in brain, liver and kidney.

It localises to the late endosome membrane. Its subcellular location is the lysosome membrane. The protein resides in the cytoplasmic vesicle membrane. It is found in the cell projection. The protein localises to the phagocytic cup. It localises to the cytoplasmic vesicle. Its subcellular location is the phagosome membrane. The protein resides in the cell membrane. It carries out the reaction Ca(2+)(in) = Ca(2+)(out). The enzyme catalyses Fe(2+)(in) = Fe(2+)(out). It catalyses the reaction Mg(2+)(in) = Mg(2+)(out). The catalysed reaction is K(+)(in) = K(+)(out). It carries out the reaction Na(+)(in) = Na(+)(out). With respect to regulation, channel activity is controlled by multiple regulatory mechanisms in different subcellular compartments. Lower pH by itself has an inhibitory effect on channel conductance. Channel function is transiently modulated by changes in Ca(2+) in a pH-dependent manner; pH changes modify the aggregation state of unitary channels; a negative cooperativity between extracellular/lumenal Ca(2+) and H(+) is suggested. Fe(2+) channel activity is potentiated by low pH. Regulated by phosphoinositides in a compartment-specific manner: in lysosomes activated by PtdIns(3,5)P2 (Phosphatidylinositol 3,5-bisphosphate) and at the plasma membrane inhibited by PtdIns(4,5)P2 (Phosphatidylinositol 4,5-bisphosphate). Nonselective cation channel probably playing a role in the regulation of membrane trafficking events and of metal homeostasis. Acts as a Ca(2+)-permeable cation channel with inwardly rectifying activity. Proposed to play a major role in Ca(2+) release from late endosome and lysosome vesicles to the cytoplasm, which is important for many lysosome-dependent cellular events, including the fusion and trafficking of these organelles, exocytosis and autophagy. Required for efficient uptake of large particles in macrophages in which Ca(2+) release from the lysosomes triggers lysosomal exocytosis. May also play a role in phagosome-lysosome fusion. Involved in lactosylceramide trafficking indicative for a role in the regulation of late endocytic membrane fusion/fission events. By mediating lysosomal Ca(2+) release is involved in regulation of mTORC1 signaling and in mTOR/TFEB-dependent lysosomal adaptation to environmental cues such as nutrient levels. Seems to act as lysosomal active oxygen species (ROS) sensor involved in ROS-induced TFEB activation and autophagy. Also functions as a Fe(2+) permeable channel in late endosomes and lysosomes. Also permeable to Mg(2+), Na(+). K(+) and Cs(+). Proposed to play a role in zinc homeostasis probably implicating its association with TMEM163. In adaptive immunity, TRPML2 and TRPML1 may play redundant roles in the function of the specialized lysosomes of B cells. In terms of biological role, may contribute to cellular lipase activity within the late endosomal pathway or at the cell surface which may be involved in processes of membrane reshaping and vesiculation, especially the growth of tubular structures. However, it is not known, whether it conveys the enzymatic activity directly, or merely facilitates the activity of an associated phospholipase. The chain is Mucolipin-1 from Mus musculus (Mouse).